We begin with the raw amino-acid sequence, 236 residues long: Small ribosomal subunit protein uS2c (236 aa).

It belongs to the universal ribosomal protein uS2 family.

It localises to the plastid. The protein resides in the chloroplast. This is Small ribosomal subunit protein uS2c (rps2) from Liriodendron tulipifera (Tuliptree).